A 220-amino-acid polypeptide reads, in one-letter code: Small ribosomal subunit protein uS2 (220 aa).

Positions 201 to 220 are disordered; it reads LPPDGDLPEPPSEFEVKFKR.

It belongs to the universal ribosomal protein uS2 family.

The protein is Small ribosomal subunit protein uS2 of Staphylothermus marinus (strain ATCC 43588 / DSM 3639 / JCM 9404 / F1).